The following is a 348-amino-acid chain: Dihydroorotase (348 aa).

2 residues coordinate Zn(2+): H17 and H19. Substrate-binding positions include 19–21 (HLR) and N45. The Zn(2+) site is built by K103, H140, and H178. Residue K103 is modified to N6-carboxylysine. Substrate is bound at residue H140. Position 223 (L223) interacts with substrate. Zn(2+) is bound at residue D251. D251 is a catalytic residue. H255 and A267 together coordinate substrate.

This sequence belongs to the metallo-dependent hydrolases superfamily. DHOase family. Class II DHOase subfamily. Homodimer. It depends on Zn(2+) as a cofactor.

It carries out the reaction (S)-dihydroorotate + H2O = N-carbamoyl-L-aspartate + H(+). Its pathway is pyrimidine metabolism; UMP biosynthesis via de novo pathway; (S)-dihydroorotate from bicarbonate: step 3/3. In terms of biological role, catalyzes the reversible cyclization of carbamoyl aspartate to dihydroorotate. This is Dihydroorotase from Salmonella agona (strain SL483).